The chain runs to 88 residues: Alpha-latrotoxin associated low molecular weight protein 2 (88 aa).

The N-terminal stretch at 1–19 (MLKLICIVFLVTVLTFVVG) is a signal peptide. Disulfide bonds link C30–C66, C46–C62, and C49–C75.

Belongs to the arthropod CHH/MIH/GIH/VIH hormone family. Expressed by the venom gland.

It localises to the secreted. In terms of biological role, may increase the toxicity of alpha-latrotoxin and/or other venom components. Is non-toxic to mice and to the cockroach Periplaneta americana. The chain is Alpha-latrotoxin associated low molecular weight protein 2 from Latrodectus geometricus (Brown widow spider).